A 261-amino-acid chain; its full sequence is Glucose 1-dehydrogenase 1 (261 aa).

Residue Val11–Val35 participates in NADP(+) binding. Ser145 serves as a coordination point for substrate. Tyr158 acts as the Proton acceptor in catalysis.

Belongs to the short-chain dehydrogenases/reductases (SDR) family. As to quaternary structure, homotetramer.

It catalyses the reaction D-glucose + NAD(+) = D-glucono-1,5-lactone + NADH + H(+). The catalysed reaction is D-glucose + NADP(+) = D-glucono-1,5-lactone + NADPH + H(+). In terms of biological role, may play some role in spore germination. This chain is Glucose 1-dehydrogenase 1 (gdhI), found in Priestia megaterium (Bacillus megaterium).